The chain runs to 2698 residues: MKMKIQKKEKQLSKLRALNHSPMSDASVNFDYKSPSPFDCSPDQGENIEEAANHCLPQKDFYTTEEEADTLFSRKLMSHNGMEDNGGRGTGVKKKRKKKEPGEQEGTKASKDREPKPKRKREPKEPKEPRRAKEPKRAKEPKEAKQKDGVKKPRKPREASGTKEGKEKRSCTDCGPRTKPKKASKDQGPTPVERKKKGKRKNETTVESLELDQSLPNPSLQSPEEPSESADSQKRRSGRQVKRRKYNEDLDFKVVDDDGETIAVLGAGRTSALSASTLAWQAEEPPEDDANIIEKILASKTVQEVHPGEPPFDLELFYVKYRNFSYLHCKWATMEELEKDPRIAQKIKRFRNKQAQMKHIFTEPDEDLFNPDYIEIDRILEVAHTKDAETGEEVTHYLVKWCSLPYEESTWELEEDVDPAKVKEFESLQILPEVKPVERPASDAWQKLETSREYKNSNRLREYQLEGMNWLLFNWYNRKNCILADEMGLGKTIQSIAFLSEIFVRGIHGPFLIIAPLSTITNWEREFRTWTEMNAIVYHGSQISRQMIQQYEMVYRDAQGNPLSGVFKFHVVITTFEMILADCPELKKIHWSCVVIDEAHRLKNRNCKLLEGLKLMALEHKVLLTGTPLQNSVEELFSLLNFLEPSQFPSETAFLEEFGDLKTEEQVKKLQSILKPMMLRRLKDDVEKNLAPKQETIIEVELTNIQKKYYRAILEKNFSFLTKGANQHNMPNLINTMMELRKCCNHPYLINGAEEKILEDFRKAHSSEASDFQLQAMIQAAGKLVLIDKLLPKLIAGGHKVLIFSQMVRCLDILEDYLIQRRYTYERIDGRVRGNLRQAAIDRFCKPDSDRFVFLLCTRAGGLGINLTAADTCIIFDSDWNPQNDLQAQARCHRIGQSKAVKVYRLITRNSYEREMFDKASLKLGLDKAILQDINRKGSTNGVQQLSKMEVEDLLRKGAYGALMDEEDEGSKFCEEDIDQILQRRTHTITIQSEGKGSTFAKASFVASGNRTDISLDDPNFWQKWAKIAELDTEANNEKESLVIDRPRVRKQTKHYNSFEEDELMEFSELDSDSDERPTRSRRLSDKARRYLRAECFRVEKNLLTFGWGRWKDILTHGRFKWPLNEKDMEVICRALLVYCVKHYKGDEKIKSFIWELITPSKDGQVQTLQNHSGLSAPVPRGRKGKKTKNQLLLPELKTADWLATCNPEVVLHDDGYKKHLKQHCNKVLLRVRMLYYLKAEILGEAADKAFEGTPARELDVLLPDIDYVEIPVDWWDAEADKSLLIGVFKHGYERYNAMRADPALCFLEKVGMPDEKSLSAEQGVTDGTSDIPERGNIDKEDSAEDKVDGLQKQTASPSDGSDGIFGEKKDDSQAVSSALTARLRRLVTIYQRCNRKELCRPEILGPGNQGYWVQEEVFRRTSDMDLINKEAQKRWTRREQADFYRTVSSFGVVYDQEKEAFDWTQFRAISRLDKKSDENLEHYFHSFVAMCRNVCRLPTWKDDGPPDASIYVEPITEERAAKTLYRIELLRKVREQVLTCPQLHERLQLCRPSLYLPVWWECGKHDRDLLIGTAKHGLNRTDYYIMNDPQLSFLDAYRNYAQHKRTDTQAPGSLCCLYQGNSKLYESLTYTPMSRTSESLESEPENLVKMDSRDDHLCLPEAGLPDITCENFVSKVQEVISLDHDESLLPESLENMMYGKTGLSQEPRSFQEAPSTNMQSRKKTVTVSASRDESCQLPGIEAEITSASSLMSSLEAGVAKMNIKNGKHLLVSISEEGEPCCSETGRSPESRGRLEARCLASPTLDTGHESGFVDLCSLSVYDSKRNFSSDQQLIDLLENKSLENKLILNQSDEEEEENEKETLAIVASTTEKPAVLDFTQPTASIPRGKNLSFHQDEAKKGRLEVGSKTPGPQRAFPPSANQCHCKHIERWAHGLGSEESEGEKPKAYEPDPYRSKANNTTVEGEPAIIPTEPFKLKHELLKEPWKESSEGGKSFSMYVPEGSEPKSEEMDFENKDDYEKDGACHSQDYPGKYSEEESKSSASGIAGDLGEEAQEVRAPTIAQLLQEKTLYSFSEWPKDRVIINRLDNICHVVLKGKWPCSHQYEPSGALPTPVLSSSAGSRSSLSEPEATEHSFSNGAALAAQIQKESFLAPVFTKDEQKHRRPYEFEVERDAKARSLEEYSASHGRPPIVLNGWHGESAIDLSCSSEGSPGATSPFPVSASTPKIGAISSLQGALGMDLSGILQAGLIHPVTGQIVNGSLRRDDAAMRRRRGRRKHIEGGMDLIFLKEQTLQAGILEVHEDAGQTTLNTTHPEGPGAASSASEPTAAASSQAEKAVPSKSLLDWLRQQADYSLDVPGFGASFSDKPKQRRPRCKEPGKLDIGSLGGEERVSAVPKEPGLRGFLPESKFNHTLAEPVLRDAGPRRRGRRPRNELLKAPAIVADSPSGMGPLFMNGLIAGMDLVGLQNVRNIPGIPLTGLVGFPAGFATMPTGEDVKNTLSMLPMMLPGMATVPQMFGVGGLLNTPMATTCTTTASASLASTKSGASATEKTTEDELSGRDVKADSLVEDKPGPSPFSDQSEPTITTSSPVAFNPFLIPGVSPGLIYPSMFLSPGMGMALPAMQQGRHSEMAGLETQKRKKKKTKGDNPTPEPASVCEREPGSDQNCTESSVTVSPEREHVAQAREEGLKDSNDDTN.

3 stretches are compositionally biased toward basic and acidic residues: residues 1–12 (MKMKIQKKEKQL), 100–115 (EPGE…DREP), and 122–171 (EPKE…KRSC). The tract at residues 1–243 (MKMKIQKKEK…KRRSGRQVKR (243 aa)) is disordered. The segment at 1 to 746 (MKMKIQKKEK…MMELRKCCNH (746 aa)) is required for DNA-dependent ATPase activity. Residues 213–224 (QSLPNPSLQSPE) are compositionally biased toward low complexity. Chromo domains follow at residues 291 to 342 (NIIE…KDPR) and 374 to 438 (IEID…KPVE). Residues 472–646 (LFNWYNRKNC…FSLLNFLEPS (175 aa)) form the Helicase ATP-binding domain. 485–492 (DEMGLGKT) is a binding site for ATP. The DEAH box motif lies at 597-600 (DEAH). Positions 786–955 (LIDKLLPKLI…LSKMEVEDLL (170 aa)) constitute a Helicase C-terminal domain. Residues 1318–1370 (SLSAEQGVTDGTSDIPERGNIDKEDSAEDKVDGLQKQTASPSDGSDGIFGEKK) are disordered. Residues 1320-1329 (SAEQGVTDGT) show a composition bias toward polar residues. Positions 1332-1350 (IPERGNIDKEDSAEDKVDG) are enriched in basic and acidic residues. The 55-residue stretch at 1435–1489 (RWTRREQADFYRTVSSFGVVYDQEKEAFDWTQFRAISRLDKKSDENLEHYFHSFV) folds into the Myb-like domain. The span at 1707–1730 (EPRSFQEAPSTNMQSRKKTVTVSA) shows a compositional bias: polar residues. The interval 1707-1731 (EPRSFQEAPSTNMQSRKKTVTVSAS) is disordered. Serine 1852 is modified (phosphoserine). 6 disordered regions span residues 1935–2046 (GLGS…ASGI), 2111–2137 (LPTP…HSFS), 2308–2337 (TTLN…QAEK), 2359–2387 (PGFG…IGSL), 2538–2587 (ASLA…PTIT), and 2626–2698 (QGRH…DDTN). Basic and acidic residues-rich tracts occupy residues 1943 to 1955 (GEKP…DPYR), 1975 to 1991 (FKLK…ESSE), and 2004 to 2024 (SEPK…KDGA). 2 stretches are compositionally biased toward low complexity: residues 2117-2127 (SSSAGSRSSLS) and 2315-2336 (PEGP…SQAE). Residues 2538–2550 (ASLASTKSGASAT) show a composition bias toward low complexity. A compositionally biased stretch (basic and acidic residues) spans 2552–2573 (KTTEDELSGRDVKADSLVEDKP). Polar residues-rich tracts occupy residues 2578–2587 (FSDQSEPTIT) and 2664–2675 (SDQNCTESSVTV). Basic and acidic residues predominate over residues 2677–2698 (PEREHVAQAREEGLKDSNDDTN).

It belongs to the SNF2/RAD54 helicase family. As to quaternary structure, interacts with NFE2L2; involved in activation of the transcription. May interact with PPARA. Widely expressed.

The protein resides in the nucleus. The protein localises to the nucleoplasm. It carries out the reaction ATP + H2O = ADP + phosphate + H(+). Its function is as follows. ATP-dependent chromatin-remodeling factor. Regulates transcription by disrupting nucleosomes in a largely non-sliding manner which strongly increases the accessibility of chromatin. Activates transcription of specific genes in response to oxidative stress through interaction with NFE2L2. The polypeptide is Chromodomain-helicase-DNA-binding protein 6 (Chd6) (Rattus norvegicus (Rat)).